Reading from the N-terminus, the 178-residue chain is Acireductone dioxygenase (178 aa).

Positions 100, 102, 106, and 145 each coordinate Fe(2+). Ni(2+) contacts are provided by histidine 100, histidine 102, glutamate 106, and histidine 145.

Belongs to the acireductone dioxygenase (ARD) family. As to quaternary structure, monomer. Fe(2+) serves as cofactor. Requires Ni(2+) as cofactor.

The enzyme catalyses 1,2-dihydroxy-5-(methylsulfanyl)pent-1-en-3-one + O2 = 3-(methylsulfanyl)propanoate + CO + formate + 2 H(+). It catalyses the reaction 1,2-dihydroxy-5-(methylsulfanyl)pent-1-en-3-one + O2 = 4-methylsulfanyl-2-oxobutanoate + formate + 2 H(+). Its pathway is amino-acid biosynthesis; L-methionine biosynthesis via salvage pathway; L-methionine from S-methyl-5-thio-alpha-D-ribose 1-phosphate: step 5/6. Catalyzes 2 different reactions between oxygen and the acireductone 1,2-dihydroxy-3-keto-5-methylthiopentene (DHK-MTPene) depending upon the metal bound in the active site. Fe-containing acireductone dioxygenase (Fe-ARD) produces formate and 2-keto-4-methylthiobutyrate (KMTB), the alpha-ketoacid precursor of methionine in the methionine recycle pathway. Ni-containing acireductone dioxygenase (Ni-ARD) produces methylthiopropionate, carbon monoxide and formate, and does not lie on the methionine recycle pathway. The protein is Acireductone dioxygenase of Bacillus velezensis (strain DSM 23117 / BGSC 10A6 / LMG 26770 / FZB42) (Bacillus amyloliquefaciens subsp. plantarum).